A 544-amino-acid polypeptide reads, in one-letter code: Ribosomal oxygenase 1 (544 aa).

A disordered region spans residues 1–78; the sequence is MERKHMSALS…HEGERDCREM (78 aa). Polar residues predominate over residues 10 to 19; sequence SIYQSLSGGK. Over residues 42–53 the composition is skewed to basic residues; sequence PSKKATKKKGTK. Over residues 63–78 the composition is skewed to basic and acidic residues; that stretch reads SSEKEKHEGERDCREM. In terms of domain architecture, JmjC spans 197-342; sequence CSIRMLNPQA…DLMLKLMPAA (146 aa). Fe cation-binding residues include H243, D245, and H308.

The protein belongs to the ROX family. NO66 subfamily. Fe(2+) serves as cofactor.

It localises to the nucleus. The protein resides in the nucleolus. It is found in the nucleoplasm. It catalyses the reaction N(6),N(6)-dimethyl-L-lysyl(36)-[histone H3] + 2 2-oxoglutarate + 2 O2 = L-lysyl(36)-[histone H3] + 2 formaldehyde + 2 succinate + 2 CO2. The enzyme catalyses N(6)-methyl-L-lysyl-[protein] + 2-oxoglutarate + O2 = L-lysyl-[protein] + formaldehyde + succinate + CO2. It carries out the reaction L-histidyl-[protein] + 2-oxoglutarate + O2 = (3S)-3-hydroxy-L-histidyl-[protein] + succinate + CO2. In terms of biological role, oxygenase that can act as both a histone lysine demethylase and a ribosomal histidine hydroxylase. Specifically demethylates 'Lys-4' (H3K4me) and 'Lys-36' (H3K36me) of histone H3, thereby playing a central role in histone code. Preferentially demethylates trimethylated H3 'Lys-4' (H3K4me3) and monomethylated H3 'Lys-4' (H3K4me1) residues, while it has weaker activity for dimethylated H3 'Lys-36' (H3K36me2). Also catalyzes demethylation of non-histone proteins. Also catalyzes the hydroxylation of 60S ribosomal protein L8 on 'His-216', thereby playing a role in ribosome biogenesis. In Danio rerio (Zebrafish), this protein is Ribosomal oxygenase 1 (riox1).